The following is a 406-amino-acid chain: Probable tRNA sulfurtransferase (406 aa).

The 103-residue stretch at 60 to 162 folds into the THUMP domain; that stretch reads PEAKARLQDT…PGAALLEVER (103 aa). ATP is bound by residues 180 to 181, 205 to 206, Arg-262, Gly-284, and Gln-293; these read LL and HF.

Belongs to the ThiI family.

The protein localises to the cytoplasm. It catalyses the reaction [ThiI sulfur-carrier protein]-S-sulfanyl-L-cysteine + a uridine in tRNA + 2 reduced [2Fe-2S]-[ferredoxin] + ATP + H(+) = [ThiI sulfur-carrier protein]-L-cysteine + a 4-thiouridine in tRNA + 2 oxidized [2Fe-2S]-[ferredoxin] + AMP + diphosphate. It carries out the reaction [ThiS sulfur-carrier protein]-C-terminal Gly-Gly-AMP + S-sulfanyl-L-cysteinyl-[cysteine desulfurase] + AH2 = [ThiS sulfur-carrier protein]-C-terminal-Gly-aminoethanethioate + L-cysteinyl-[cysteine desulfurase] + A + AMP + 2 H(+). Its pathway is cofactor biosynthesis; thiamine diphosphate biosynthesis. Functionally, catalyzes the ATP-dependent transfer of a sulfur to tRNA to produce 4-thiouridine in position 8 of tRNAs, which functions as a near-UV photosensor. Also catalyzes the transfer of sulfur to the sulfur carrier protein ThiS, forming ThiS-thiocarboxylate. This is a step in the synthesis of thiazole, in the thiamine biosynthesis pathway. The sulfur is donated as persulfide by IscS. In Thermus thermophilus (strain ATCC 27634 / DSM 579 / HB8), this protein is Probable tRNA sulfurtransferase.